We begin with the raw amino-acid sequence, 446 residues long: Adenylosuccinate synthetase (446 aa).

GTP contacts are provided by residues 12–18 (GDEGKGK) and 40–42 (GHT). The active-site Proton acceptor is the Asp-13. Residues Asp-13 and Gly-40 each coordinate Mg(2+). Residues 13-16 (DEGK), 38-41 (NAGH), Thr-128, Arg-142, Gln-223, Thr-238, and Arg-302 contribute to the IMP site. His-41 (proton donor) is an active-site residue. Residue 298–304 (TTTGRRR) participates in substrate binding. GTP-binding positions include Arg-304, 330-332 (KLD), and 412-414 (SLG).

It belongs to the adenylosuccinate synthetase family. As to quaternary structure, homodimer. Mg(2+) is required as a cofactor.

The protein localises to the cytoplasm. It catalyses the reaction IMP + L-aspartate + GTP = N(6)-(1,2-dicarboxyethyl)-AMP + GDP + phosphate + 2 H(+). Its pathway is purine metabolism; AMP biosynthesis via de novo pathway; AMP from IMP: step 1/2. In terms of biological role, plays an important role in the de novo pathway of purine nucleotide biosynthesis. Catalyzes the first committed step in the biosynthesis of AMP from IMP. This Acaryochloris marina (strain MBIC 11017) protein is Adenylosuccinate synthetase.